The primary structure comprises 467 residues: Probable amino acid permease 7 (467 aa).

Over methionine 1–threonine 29 the chain is Cytoplasmic. The chain crosses the membrane as a helical span at residues leucine 30–alanine 50. Residues tryptophan 51 to tryptophan 58 lie on the Extracellular side of the membrane. Residues isoleucine 59–leucine 79 form a helical membrane-spanning segment. Over serine 80–glutamate 111 the chain is Cytoplasmic. Residues isoleucine 112–valine 132 form a helical membrane-spanning segment. Over isoleucine 133–tyrosine 163 the chain is Extracellular. 2 helical membrane-spanning segments follow: residues phenylalanine 164–methionine 184 and valine 185–leucine 205. Residues alanine 206–lysine 231 are Extracellular-facing. A helical transmembrane segment spans residues valine 232 to leucine 252. Topologically, residues leucine 253–threonine 274 are cytoplasmic. A helical membrane pass occupies residues valine 275 to phenylalanine 295. Over glycine 296–proline 312 the chain is Extracellular. The chain crosses the membrane as a helical span at residues phenylalanine 313–valine 333. At tyrosine 334–threonine 383 the chain is on the cytoplasmic side. A run of 2 helical transmembrane segments spans residues methionine 384–glycine 404 and valine 405–leucine 425. Residues glutamine 426 to serine 443 are Cytoplasmic-facing. The helical transmembrane segment at phenylalanine 444–alanine 464 threads the bilayer. At lysine 465–glycine 467 the chain is on the extracellular side.

The protein belongs to the amino acid/polyamine transporter 2 family. Amino acid/auxin permease (AAAP) (TC 2.A.18.2) subfamily.

It localises to the cell membrane. Its function is as follows. Amino acid-proton symporter. Stereospecific transporter with a broad specificity for neutral amino acids. In Arabidopsis thaliana (Mouse-ear cress), this protein is Probable amino acid permease 7 (AAP7).